A 327-amino-acid polypeptide reads, in one-letter code: Alkene monooxygenase system, ferredoxin--NAD(+) reductase component (327 aa).

The 2Fe-2S ferredoxin-type domain maps to 1–89; the sequence is MRLNDGRSFS…DLEINVRAGD (89 aa). [2Fe-2S] cluster-binding residues include Cys-32, Cys-37, Cys-40, and Cys-73. The FAD-binding FR-type domain occupies 96-194; the sequence is PRRHAARVTV…EGPYGRAYLR (99 aa).

The protein belongs to the bacterial ring-hydroxylating dioxygenase ferredoxin reductase family. As to quaternary structure, monomer. The alkene monooxygenase multicomponent enzyme system is composed of an electron transfer component and a monooxygenase component interacting with the effector protein XamoD. The electron transfer component is composed of a ferredoxin reductase (XamoF) and a ferredoxin (XamoC), and the monooxygenase component is formed by a heterohexamer (dimer of heterotrimers) of two alpha subunits (XamoA), two beta subunits (XamoE) and two gamma subunits (XamoB). FAD is required as a cofactor. [2Fe-2S] cluster serves as cofactor.

It is found in the cytoplasm. The catalysed reaction is 2 reduced [2Fe-2S]-[ferredoxin] + NAD(+) + H(+) = 2 oxidized [2Fe-2S]-[ferredoxin] + NADH. Functionally, reductase component of the alkene monooxygenase multicomponent enzyme system which catalyzes the O2- and NADH-dependent epoxidation of short chain (C2 to C6) alkenes to their corresponding epoxides. Ferredoxin reductase catalyzes the transfer of electrons from NADH to ferredoxin (XamoC). NADPH is also effective but with a rate approximately 3-fold lower than with NADH. The protein is Alkene monooxygenase system, ferredoxin--NAD(+) reductase component of Xanthobacter autotrophicus (strain ATCC BAA-1158 / Py2).